The chain runs to 240 residues: Glutamine amidotransferase-like protein chry6 (240 aa).

A Glutamine amidotransferase type-1 domain is found at 13-205; sequence NFILDDTGGR…FVASDNPVLV (193 aa). C102 functions as the Nucleophile in the catalytic mechanism. Active-site residues include H185 and E187.

This sequence belongs to the peptidase C26 family.

Its pathway is pigment biosynthesis. In terms of biological role, glutamine amidotransferase-like protein; part of the gene cluster that mediates the biosynthesis of the yellow pigment chrysogine. Pyruvic acid and anthranilic acid are likely substrates for the nonribosomal peptide synthetase chry1/NRPS14, with pyruvic acid adenylated by the first A domain and anthranilic acid by the second. If pyruvic acid and anthranilic acid are merged and released from chry1/NRPS14 by hydrolysis, a subsequent amidation would lead to 2-pyruvoylaminobenzamide. This process is probably catalyzed by the amidotransferase chry2 using glutamine as amino donor. The dehydrogenase chry5 that has a terminal berberine bridge domain for C-N cyclization could catalyze the cyclization of 2-pyruvoylaminobenzamide to yield acetyl-4(3H)-quinazolidinone. A final reduction of acetyl-4(3H)-quinazolidinone catalyzed by the oxidoreductase chry4 would result in chrysogine. In Gibberella zeae (strain ATCC MYA-4620 / CBS 123657 / FGSC 9075 / NRRL 31084 / PH-1) (Wheat head blight fungus), this protein is Glutamine amidotransferase-like protein chry6.